We begin with the raw amino-acid sequence, 501 residues long: TNF receptor-associated factor 2 (501 aa).

N-acetylalanine is present on alanine 2. Serine 5 is subject to Phosphoserine. Phosphothreonine is present on threonine 7. The residue at position 11 (serine 11) is a Phosphoserine. A Phosphothreonine modification is found at threonine 22. Lysine 31 is covalently cross-linked (Glycyl lysine isopeptide (Lys-Gly) (interchain with G-Cter in ubiquitin)). Residues 34 to 73 (CSACRNVLRRPFQAQCGHRYCSFCLASILSSGPQNCAACV) form an RING-type zinc finger. Threonine 117 is subject to Phosphothreonine; by PKC. TRAF-type zinc fingers lie at residues 124–180 (CHEG…AHHE) and 177–233 (AHHE…EKQQ). Residues 283-293 (ENIVCVLNREV) are important for interaction with BIRC2 and BIRC3. Positions 299–348 (TAEACSRQHRLDQDKIEALSSKVQQLERSIGLKDLAMADLEQKVLEMEAS) form a coiled coil. Lysine 320 is covalently cross-linked (Glycyl lysine isopeptide (Lys-Gly) (interchain with G-Cter in ubiquitin)). The 146-residue stretch at 351 to 496 (DGVFIWKISD…DDAIFIKAIV (146 aa)) folds into the MATH domain.

Belongs to the TNF receptor-associated factor family. A subfamily. Homotrimer. Heterotrimer with TRAF1. Heterotrimer with TRAF3 (via TRAF domain). The domain containing the RING-type and the first TRAF-type zinc finger can also form homodimers (in vitro). Interacts with TNFRSF1B/TNFR2. Interacts with TNFRSF5/CD40. Interacts with TNFRSF4, TNFRSF7/CD27, TNFRSF8/CD30, TNFRSF9/CD137, TNFRSF11A/RANK, TNFRSF13B/TACI, TNFRSF14, TNFRSF16/NGFR, TNFRSF17/BCMA, TNFRSF18/AITR, TNFRSF19/TROY, TNFRSF19L/RELT and EDAR. Stimulation of TNF-alpha receptor TNFRSF1A leads to the formation of two distinct signaling complexes. Plasma membrane-bound complex I is composed of TNFRSF1A, TRADD, RIPK1, TRAF2 and BIRC2/c-IAP1 or BIRC3 which interacts with CHUCK/IKK-alpha, IKBKB/IKK-beta and IKBKG/IKK-gamma promoting cell survival. Subsequently, TRADD, RIPK1 and TRAF2 dissociate from TNFRSF1A and form cytoplasmic complex II with FADD and caspase CASP8 promoting cell apoptosis. Interacts with TRADD. Identified in a complex with TNFRSF1A, RIPK1 and IKBKB/IKK-beta. Interacts with RIPK2. Interacts with BIRC2 and BIRC3 N-terminus; a single BIRC2 or BIRC3 molecule interacts with a heterotrimer formed by TRAF1 and TRAF2, or a TRAF2 homotrimer. Identified in a complex composed of TRAF2, TRAF3, BIRC2 and BIRC3. Interacts with BIRC2; the interaction promotes BIRC2 stability. Interaction with BIRC2 and/or BIRC3 is essential for ubiquitination of IKBKE, degradation of NFKBIA and activation of NF-kappa-B. Within complex I, phosphorylated TRAF2 interacts (via 'Lys-63'-linked polyubiquitin chains) with CHUCK/IKK-alpha, IKBKB/IKK-beta, IKBKG/IKK-gamma TAB2, TAB3 and TAK1 in response to TNF-alpha stimulation. Within complex I, interacts with UXT isoform 1 (via TPQE motif); the interaction prevents the recruitment of FADD and CASP8/caspase 8 to complex I. Forms a complex composed of TNFRSF8/CD30 or TNFRSF1B/TNFR2, and TRAF1, TRAF2 and E3 ligase TRAIP. Within the complex, interacts with TRAIP; the interaction inhibits TRAF2-mediated NF-kappa B activation. Component of a complex composed of TANK and TBK1. Interacts with TRPC4AP. Interacts with MAP3K1/MEKK1, MAP3K5/ASK1 and MAP3K11/MLK3 in response to TNF-alpha stimulation; the interaction leads to JNK activation and interaction with MAP3K5 is inhibited by PRMT1. Component of a complex composed of MAP3K14/NIK BIRC3 and TRAF3; the interaction leads to BIRC2/3-mediated ubiquitination of TRAF3 upon CD40 engagement in a TRAF2-dependent manner. Interacts with MAP3K14/NIK in response to TNF-alpha stimulation; the interaction leads to NF-kappa B activation. Interacts with PEG3; the interaction may promote TRAF2-mediated NF-kappa B activation. Interacts with HIVEP3; the interaction may inhibit TNF-alpha-TRAF2-mediated NF-kappa B and JNK activation. Interacts with TANK/ITRAF; the interaction prevents interaction between TNFRSF1B/TNFR2 and TRAF2. Interacts with deubiquitinating enzyme CYLD; the interaction results in the deubiquitination and inactivation of TRAF2. Interacts with SIAH2; the interaction leads to TRAF2 ubiquitination and degradation. Interacts with E2 conjugating enzyme UBE2N/Ubc13, E3 ligase ITCH and RNF11 in response to TNF-alpha stimulation. Interacts with ubiquitin-editing enzyme TNFAIP3/A20 in response to TNF-alpha stimulation; the interaction promotes TRAF2 dissociation from UBE2N/Ubc13, ITCH, RNF11 and TAX1BP1 and prevents prolonged TRAF-2 ubiquitination. Interacts with TAX1BP1 in response to TNF-alpha stimulation; the interaction promotes TRAF2 dissociation from UBE2N/Ubc13 and TNFAIP3/A20, and prevents prolonged TRAF-2 ubiquitination. Interacts (via C-terminus) with EIF2AK2/PKR (via the kinase catalytic domain). Interacts with deubiquitinating enzyme USP48. Interacts with PTPN2; probably involved in TNF-mediated signaling. Interacts with Toll-like receptor TLR4/3 adapter TICAM1/TRIF; the interaction may promote TICAM1 ubiquitination. Interacts with kinase/endoribonuclease ERN1/IRE1 and DAB2IP in response to ER stress; the interaction requires DAB2IP. Interacts with ERN1/IRE1 and TAOK3 in response to ER stress; the interaction may promote TRAF2 phosphorylation. Interacts (via zinc fingers) with DAB2IP (via C-terminus PER domain)in response to TNF-alpha stimulation. Interacts with CASP8AP2/FLASH. Interacts with NFATC2IP; the interaction may repress IL-4 production in T cells. Interacts with kinase CDK9. Interacts with sphingosine kinase 1 SPHK1. Interacts with kinase TNIK. Interacts with TRAFD1. Interacts with DNA phosphodiesterase TDP2. Interacts with MAVS/IPS1. Interacts with CARD14. Interacts with Epstein-Barr virus LMP1/BNFL1. Interacts with GPS2. Interacts with XPNPEP3. Interacts with RIPK3. Interacts with RELL2. Interacts with LRRC19. Interacts with GAPDH; promoting TRAF2 ubiquitination. Phosphorylated at several serine residues within the first 128 amino acid residues. Phosphorylated at Thr-117 in response to signaling via TNF and TNFRSF1A. Phosphorylation at Thr-117 is required for 'Lys-63'-linked polyubiquitination, but not for 'Lys-48'-linked polyubiquitination. Phosphorylation at Thr-117 is important for interaction with IKKA and IKKB, activation of IKK and subsequent activation of NF-kappa-B. Post-translationally, undergoes both 'Lys-48'-linked and 'Lys-63'-linked polyubiquitination. Polyubiquitinated via 'Lys-63'-linked ubiquitin in response to TNF signaling; this requires prior phosphorylation at Thr-117. 'Lys-63'-linked polyubiquitination promotes TRAF2-mediated activation of NF-kappa-B. Can be polyubiquitinated at several Lys residues via 'Lys-48'-linked ubiquitin chains in response to TNF signaling, leading to proteasomal degradation. Autoubiquitinated, leading to its subsequent proteasomal degradation. Polyubiquitinated by BIRC2 and SIAH2, leading to its subsequent proteasomal degradation. Deubiquitinated by CYLD, a protease that specifically cleaves 'Lys-63'-linked polyubiquitin chains. Ubiquination is inhibited by LRRC19; inhibits proteasomal degradation. Ubiquitinated at Lys-320 by the SCF(FBXL2) complex, leading to its degradation by the proteasome. Ubiquitinated by E3 ubiquitin-protein ligase complex containing FBXO7; leading to repression of NF-kappa-B signaling.

The protein localises to the cytoplasm. The enzyme catalyses S-ubiquitinyl-[E2 ubiquitin-conjugating enzyme]-L-cysteine + [acceptor protein]-L-lysine = [E2 ubiquitin-conjugating enzyme]-L-cysteine + N(6)-ubiquitinyl-[acceptor protein]-L-lysine.. Its pathway is protein modification; protein ubiquitination. Its activity is regulated as follows. Has very low E3 ubiquitin ligase activity in the absence of sphingosine-1-phosphate. E3 ubiquitin ligase activity is strongly activated by cytoplasmic sphingosine-1-phosphate. E3 ubiquitin-protein ligase that regulates activation of NF-kappa-B and JNK and plays a central role in the regulation of cell survival and apoptosis. Catalyzes 'Lys-63'-linked ubiquitination of target proteins, such as BIRC3, IKBKE, MLST8, RIPK1 and TICAM1. Is an essential constituent of several E3 ubiquitin-protein ligase complexes, where it promotes the ubiquitination of target proteins by bringing them into contact with other E3 ubiquitin ligases. Regulates BIRC2 and BIRC3 protein levels by inhibiting their autoubiquitination and subsequent degradation; this does not depend on the TRAF2 RING-type zinc finger domain. Plays a role in mediating activation of NF-kappa-B by EIF2AK2/PKR. In complex with BIRC2 or BIRC3, promotes ubiquitination of IKBKE. Acts as a regulator of mTORC1 and mTORC2 assembly by mediating 'Lys-63'-linked ubiquitination of MLST8, thereby inhibiting formation of the mTORC2 complex, while facilitating assembly of the mTORC1 complex. Required for normal antibody isotype switching from IgM to IgG. This chain is TNF receptor-associated factor 2, found in Homo sapiens (Human).